A 187-amino-acid chain; its full sequence is Plasmodium-specific hydrophobic abundant protein (187 aa).

An N-terminal signal peptide occupies residues 1–18; sequence MMKYVFVALCLFAVVALA.

This sequence to HAP-S protein.

It localises to the membrane. This is Plasmodium-specific hydrophobic abundant protein from Physarum polycephalum (Slime mold).